A 373-amino-acid chain; its full sequence is MANKDYYEVLGLQKGASDDEIKKAFRKLAIKYHPDKNKGNTEAEEKFKEINEAYQVLSDPEKKSNYDQFGSADFNGGGFGSGGFGGFDMGGFGDIFDMFTGGGSSTRRRNGPVNGNDIEYTVTLTFEEAVFGVEKEITVNRSESCEHCNGSGAEPGTSKKTCPTCSGTGQVRVQRQTPLGSFVSTSTCDRCSGTGNIIEKPCTHCRGNGNVRKTRKINVNIPAGVDTGNVMPLRGQGEHGLRGGSPGDLYIRINVSPSKEFTRKGNDIYIDTHISMAKAALGTEITVKTVEGNVKYTVPEGTQSGTLFRLKGKGVARVNSTGKGDQYVRVIVDIPKGLNQKQKEALYTFMEACGEEMDENTHSFKKNLFGRKK.

A J domain is found at 5–70; the sequence is DYYEVLGLQK…EKKSNYDQFG (66 aa). Residues 132–214 form a CR-type zinc finger; sequence GVEKEITVNR…CRGNGNVRKT (83 aa). Residues cysteine 145, cysteine 148, cysteine 162, cysteine 165, cysteine 188, cysteine 191, cysteine 202, and cysteine 205 each coordinate Zn(2+). CXXCXGXG motif repeat units follow at residues 145–152, 162–169, 188–195, and 202–209; these read CEHCNGSG, CPTCSGTG, CDRCSGTG, and CTHCRGNG.

Belongs to the DnaJ family. In terms of assembly, homodimer. Requires Zn(2+) as cofactor.

It localises to the cytoplasm. Participates actively in the response to hyperosmotic and heat shock by preventing the aggregation of stress-denatured proteins and by disaggregating proteins, also in an autonomous, DnaK-independent fashion. Unfolded proteins bind initially to DnaJ; upon interaction with the DnaJ-bound protein, DnaK hydrolyzes its bound ATP, resulting in the formation of a stable complex. GrpE releases ADP from DnaK; ATP binding to DnaK triggers the release of the substrate protein, thus completing the reaction cycle. Several rounds of ATP-dependent interactions between DnaJ, DnaK and GrpE are required for fully efficient folding. Also involved, together with DnaK and GrpE, in the DNA replication of plasmids through activation of initiation proteins. The protein is Chaperone protein DnaJ of Clostridium botulinum (strain Eklund 17B / Type B).